We begin with the raw amino-acid sequence, 293 residues long: 2-pyrone-4,6-dicarboxylate hydrolase (293 aa).

Residues 1 to 20 (MTNDERILSWNETPSKPRYT) form a disordered region. Residues 29–31 (HCH), Tyr-47, Ser-75, Arg-122, Arg-128, Tyr-154, and His-178 contribute to the substrate site. Catalysis depends on Asp-246, which acts as the Proton acceptor. Residue Asn-251 participates in substrate binding.

Belongs to the metallo-dependent hydrolases superfamily. PDC hydrolase family. As to quaternary structure, monomer.

The enzyme catalyses 2-oxo-2H-pyran-4,6-dicarboxylate + H2O = (1E)-4-oxobut-1-ene-1,2,4-tricarboxylate + H(+). The protein operates within secondary metabolite metabolism; lignin degradation. Strongly inhibited by 1 mM Zn(2+) ions. Also inhibited by pyridine-2,4-dicarboxylic acid, 5-hydroxyisophthalic acid and 5,5'-dithiobis(2-nitrobenzoic acid) (Ellman reagent). Functionally, contributes to the degradation of lignin at the level of the protocatechuate 4,5-cleavage pathway. Catalyzes the hydrolysis of 2-pyrone-4,6-dicarboxylate (PDC) to (4E)-oxalomesaconate (OMA). The keto form of OMA can tautomerize into the enol form, 4-carboxy-2-hydroxymuconate (CHM), under certain pH conditions. Also catalyzes the reverse reaction. Is essential for the growth of Sphingobium sp. SYK-6 on vanillate but is not responsible for the growth of this strain on syringate. This is 2-pyrone-4,6-dicarboxylate hydrolase from Sphingobium sp. (strain NBRC 103272 / SYK-6).